We begin with the raw amino-acid sequence, 256 residues long: Small ribosomal subunit protein uS2 (256 aa).

This sequence belongs to the universal ribosomal protein uS2 family.

In Geotalea uraniireducens (strain Rf4) (Geobacter uraniireducens), this protein is Small ribosomal subunit protein uS2.